Reading from the N-terminus, the 795-residue chain is MSGVSEEDPEGLAPQGLPALGGACLATMDKKLNVLTEKVDRLLHFQEDVTEKLQCVCQGMDHLEQDLHRLEASRELSLAGSGSTPPTTAQAAWPEVLELVRAVRQEGAQHGARLEALFKMVVAVDRAITLVGSTFQNSKVADFIMQGTVPGRKGSLADGPEENKEQAEVAGVKPNHVLTTGGVQADASRTLWEESQKEDIPVRTVEGLPLIINTSLKGADLTQAGASLRQGVEVLGPGQVPLPTEAESRLPETASENTGATLELSVAIDRISEVLTSLKMSQGGGQETSSSKPDCWLSEEAMRLSSGPLPQPLGPLTPDSDIHSGDALPRIPINMQEMATPGELLETQSGSPIGSAEAPGLGTVLEDQIPKGARPFPPLPKRSSNNGGMSAEEEIGSGAEPMRGPSLATRDWRDETVGTTDLQQGIDPGAVSPEPGKDHAAQGPGRTEAGRLSSAAEAAIVVLDDSAAPPAPFEHRVVSIKDTLISAGYTVSQHEVLGGGRFGQVHRCTERSTGLALAAKIIKVKNVKDREDVKNEVNIMNQLSHVNLIQLYDAFESKSSFTLIMEYVDGGELFDRITDEKYHLTELDVVLFTRQICEGVHYLHQHYILHLDLKPENILCVSQTGHQIKIIDFGLARRYKPREKLKVNFGTPEFLAPEVVNYEFVSFPTDMWSVGVITYMLLSGLSPFLGETDAETMNFIVNCSWDFDADTFKGLSEEAKDFVSRLLVKEKSCRMSATQCLKHEWLSHLPAKASGSNVRLRSQQLLQKYMAQSKWKKHFHVVTAVNRLRKFPTCP.

Ser155 is modified (phosphoserine). 2 disordered regions span residues 236-257 (GPGQVPLPTEAESRLPETASEN) and 305-328 (SSGPLPQPLGPLTPDSDIHSGDAL). 2 positions are modified to phosphoserine: Ser351 and Ser432. A disordered region spans residues 367–452 (DQIPKGARPF…GPGRTEAGRL (86 aa)). The Protein kinase domain occupies 491–746 (VSQHEVLGGG…ATQCLKHEWL (256 aa)). ATP is bound by residues 497–505 (LGGGRFGQV) and Lys520. Asp612 (proton acceptor) is an active-site residue.

Belongs to the protein kinase superfamily. CAMK Ser/Thr protein kinase family. The cofactor is Mg(2+). Post-translationally, phosphorylated on serine residues. In terms of tissue distribution, restricted to cardiomyocytes (at protein level). Down-regulated in heart after experimental myocardial infarction at the protein level; no significant changes at the mRNA level.

Its subcellular location is the cytoplasm. It carries out the reaction L-seryl-[myosin light chain] + ATP = O-phospho-L-seryl-[myosin light chain] + ADP + H(+). The enzyme catalyses L-threonyl-[myosin light chain] + ATP = O-phospho-L-threonyl-[myosin light chain] + ADP + H(+). Kinase that phosphorylates MYL2 in vitro. Has been proposed to be calmodulin-dependent, although MYL2 phosphorylation has also been observed in the presence or absence of calmodulin. Promotes sarcomere formation in cardiomyocytes and increases cardiomyocyte contractility. This is Myosin light chain kinase 3 (Mylk3) from Mus musculus (Mouse).